Here is a 242-residue protein sequence, read N- to C-terminus: Probable ABC transporter ATP-binding protein PEB1C (242 aa).

Positions 2-236 constitute an ABC transporter domain; sequence IELKNVNKYY…PKTERARLFL (235 aa). 34–41 is an ATP binding site; sequence GPSGSGKS.

The protein belongs to the ABC transporter superfamily.

The protein resides in the cell inner membrane. Most probably involved, with PEB1, in a binding-protein-dependent transport system for an amino acid. Probably responsible for energy coupling to the transport system. The chain is Probable ABC transporter ATP-binding protein PEB1C (peb1C) from Campylobacter jejuni subsp. jejuni serotype O:2 (strain ATCC 700819 / NCTC 11168).